A 130-amino-acid chain; its full sequence is Small ribosomal subunit protein uS8 (130 aa).

The protein belongs to the universal ribosomal protein uS8 family. Part of the 30S ribosomal subunit. Contacts proteins S5 and S12.

Its function is as follows. One of the primary rRNA binding proteins, it binds directly to 16S rRNA central domain where it helps coordinate assembly of the platform of the 30S subunit. This Stutzerimonas stutzeri (strain A1501) (Pseudomonas stutzeri) protein is Small ribosomal subunit protein uS8.